Here is a 687-residue protein sequence, read N- to C-terminus: Geranylgeranyl transferase type-2 subunit alpha 2 (687 aa).

PFTA repeat units lie at residues 38–72, 83–117, 132–167, 168–203, and 214–248; these read YTKE…SRLD, IIDE…KKGH, YQKQ…LTKT, SEED…SLVA, and TIRR…QTVK. LRR repeat units lie at residues 523–545, 546–567, 568–591, 592–616, and 646–668; these read MNNI…VEKL, LFVQ…LEAM, QLLC…SLRH, LKQL…TTRY, and LMKL…EFSS.

It belongs to the protein prenyltransferase subunit alpha family. Heterotrimer composed of the alpha subunit RGTA, the beta subunit RGTB and REP; within this trimer, RGTA and RGTB form the catalytic component, while REP mediates peptide substrate binding.

It catalyses the reaction geranylgeranyl diphosphate + L-cysteinyl-[protein] = S-geranylgeranyl-L-cysteinyl-[protein] + diphosphate. Its activity is regulated as follows. The enzymatic reaction requires the aid of the Rab escort protein REP. In terms of biological role, catalyzes the transfer of a geranylgeranyl moiety from geranylgeranyl diphosphate to both cysteines of Rab proteins with the C-terminal sequence -CCXX, CXXX, -XCCX and -XCXC, such as RABA1A, RABA2A, RABF2A and RABG2. Does not seem to be a functional Rab-GGT alpha subunit in vitro. The polypeptide is Geranylgeranyl transferase type-2 subunit alpha 2 (Arabidopsis thaliana (Mouse-ear cress)).